Consider the following 131-residue polypeptide: Maturin (131 aa).

A Phosphotyrosine modification is found at tyrosine 34. Over residues 107–120 (FEEYSADVEEEEPE) the composition is skewed to acidic residues. The segment at 107–131 (FEEYSADVEEEEPEADHPQMGVSQQ) is disordered.

This sequence belongs to the MTURN family. In terms of processing, phosphorylation at Tyr-34 is essential for its ability to promote megakaryocyte differentiation. Expressed in the thymus, bone marrow and spleen.

It localises to the cytoplasm. Promotes megakaryocyte differentiation by enhancing ERK and JNK signaling as well as up-regulating RUNX1 and FLI1 expression. Represses NF-kappa-B transcriptional activity by inhibiting phosphorylation of RELA at 'Ser- 536'. May be involved in early neuronal development. The polypeptide is Maturin (Mturn) (Mus musculus (Mouse)).